Here is a 107-residue protein sequence, read N- to C-terminus: YcgL domain-containing protein Pcryo_0807 (107 aa).

Positions 1-95 constitute a YcgL domain; that stretch reads MHCDIYKFLK…QDVMRRQAEL (95 aa).

This is YcgL domain-containing protein Pcryo_0807 from Psychrobacter cryohalolentis (strain ATCC BAA-1226 / DSM 17306 / VKM B-2378 / K5).